The chain runs to 67 residues: Cold shock protein ScoF (67 aa).

Residues 4–64 (GTVKWFNSEK…GQKGPQAENI (61 aa)) form the CSD domain.

The protein resides in the cytoplasm. The chain is Cold shock protein ScoF (scoF) from Streptomyces coelicolor (strain ATCC BAA-471 / A3(2) / M145).